The following is a 403-amino-acid chain: Ribosomal RNA large subunit methyltransferase I (403 aa).

The 80-residue stretch at 9–88 folds into the PUA domain; that stretch reads YPRLILSKGR…ESIDIAFFTR (80 aa).

Belongs to the methyltransferase superfamily. RlmI family.

The protein localises to the cytoplasm. It catalyses the reaction cytidine(1962) in 23S rRNA + S-adenosyl-L-methionine = 5-methylcytidine(1962) in 23S rRNA + S-adenosyl-L-homocysteine + H(+). In terms of biological role, specifically methylates the cytosine at position 1962 (m5C1962) of 23S rRNA. The chain is Ribosomal RNA large subunit methyltransferase I from Salmonella paratyphi C (strain RKS4594).